Consider the following 401-residue polypeptide: Solute carrier family 22 member 17 (401 aa).

10 helical membrane passes run 10-30 (GIVL…AAAG), 35-55 (IMAL…GVYL), 69-89 (VALA…GLAL), 100-120 (MITA…FLES), 184-203 (NIWK…HAIR), 218-238 (FYLC…FLGV), 247-267 (GILL…LGLW), 277-297 (TFSV…TLLA), 309-329 (GLGL…AQRL), and 336-356 (FLQH…IMLL).

Belongs to the major facilitator (TC 2.A.1) superfamily. Organic cation transporter (TC 2.A.1.19) family. As to expression, widely expressed.

Its subcellular location is the cell membrane. It localises to the vacuole membrane. Cell surface receptor for LCN2 (24p3) that plays a key role in iron homeostasis and transport. Able to bind iron-bound LCN2 (holo-24p3), followed by internalization of holo-24p3 and release of iron, thereby increasing intracellular iron concentration and leading to inhibition of apoptosis. Also binds iron-free LCN2 (apo-24p3), followed by internalization of apo-24p3 and its association with an intracellular siderophore, leading to iron chelation and iron transfer to the extracellular medium, thereby reducing intracellular iron concentration and resulting in apoptosis. This Mus musculus (Mouse) protein is Solute carrier family 22 member 17 (Slc22a17).